The chain runs to 466 residues: MLPSTVQTLTLLLTSGGVLLSLYVSASLSYLLYSDVLLKFSSTKTTAPTMSLECTNASNAQTVNHSATKEMTFPPPEPEWTYPRLSCQGSTFQKALLISPHRFGEIKGNSAPLIIREPFVACGPKECRHFALTHYAAQPGGYYNGTRKDRNKLRHLVSVKLGKIPTVENSIFHMAAWSGSACHDGREWTYIGVDGPDNDALVKIKYGEAYTDTYHSYAHNILRTQESACNCIGGDCYLMITDGSASGISKCRFLKIREGRIIKEILPTGRVEHTEECTCGFASNKTIECACRDNSYTAKRPFVKLNVETDTAEIRLMCTKTYLDTPRPDDGSIAGPCESNGDKWLGGIKGGFVHQRMASKIGRWYSRTMSKTNRMGMELYVKYDGDPWTDSDALTLSGVMVSIEEPGWYSFGFEIKDKKCDVPCIGIEMVHDGGKDTWHSAATAIYCLMGSGQLLWDTVTGVDMAL.

The Intravirion portion of the chain corresponds to 1–8 (MLPSTVQT). Residues 9-31 (LTLLLTSGGVLLSLYVSASLSYL) form a helical membrane-spanning segment. The tract at residues 13 to 35 (LTSGGVLLSLYVSASLSYLLYSD) is involved in apical transport and lipid raft association. At 32–466 (LYSDVLLKFS…DTVTGVDMAL (435 aa)) the chain is on the virion surface side. The interval 38–86 (LKFSSTKTTAPTMSLECTNASNAQTVNHSATKEMTFPPPEPEWTYPRLS) is hypervariable stalk region. Asparagine 56 and asparagine 64 each carry an N-linked (GlcNAc...) asparagine; by host glycan. Cystine bridges form between cysteine 87-cysteine 420, cysteine 122-cysteine 127, cysteine 182-cysteine 229, cysteine 231-cysteine 236, cysteine 277-cysteine 291, cysteine 279-cysteine 289, cysteine 318-cysteine 337, and cysteine 424-cysteine 447. The segment at 89 to 466 (GSTFQKALLI…DTVTGVDMAL (378 aa)) is head of neuraminidase. Arginine 116 is a substrate binding site. N-linked (GlcNAc...) asparagine; by host glycosylation is present at asparagine 144. The active-site Proton donor/acceptor is the aspartate 149. Arginine 150 serves as a coordination point for substrate. 275-276 (EE) contributes to the substrate binding site. An N-linked (GlcNAc...) asparagine; by host glycan is attached at asparagine 284. Arginine 292 provides a ligand contact to substrate. 4 residues coordinate Ca(2+): aspartate 293, threonine 297, aspartate 324, and glycine 346. A substrate-binding site is contributed by arginine 374. Tyrosine 409 serves as the catalytic Nucleophile.

Belongs to the glycosyl hydrolase 34 family. As to quaternary structure, homotetramer. It depends on Ca(2+) as a cofactor. Post-translationally, N-glycosylated.

The protein resides in the virion membrane. It localises to the host apical cell membrane. The catalysed reaction is Hydrolysis of alpha-(2-&gt;3)-, alpha-(2-&gt;6)-, alpha-(2-&gt;8)- glycosidic linkages of terminal sialic acid residues in oligosaccharides, glycoproteins, glycolipids, colominic acid and synthetic substrates.. With respect to regulation, inhibited by the neuraminidase inhibitors zanamivir (Relenza) and oseltamivir (Tamiflu). These drugs interfere with the release of progeny virus from infected cells and are effective against all influenza strains. Resistance to neuraminidase inhibitors is quite rare. Functionally, catalyzes the removal of terminal sialic acid residues from viral and cellular glycoconjugates. Cleaves off the terminal sialic acids on the glycosylated HA during virus budding to facilitate virus release. Additionally helps virus spread through the circulation by further removing sialic acids from the cell surface. These cleavages prevent self-aggregation and ensure the efficient spread of the progeny virus from cell to cell. Otherwise, infection would be limited to one round of replication. Described as a receptor-destroying enzyme because it cleaves a terminal sialic acid from the cellular receptors. May facilitate viral invasion of the upper airways by cleaving the sialic acid moieties on the mucin of the airway epithelial cells. Likely to plays a role in the budding process through its association with lipid rafts during intracellular transport. May additionally display a raft-association independent effect on budding. Plays a role in the determination of host range restriction on replication and virulence. Sialidase activity in late endosome/lysosome traffic seems to enhance virus replication. The sequence is that of Neuraminidase from Influenza B virus (strain B/Lee/1940).